The primary structure comprises 1391 residues: CAP-Gly domain-containing linker protein 1 (1391 aa).

The interval 1 to 53 is disordered; the sequence is MSMLKPSGLKAPTKILKPGSTALKTPAAAAAPVEKTIPSEKASGPPSSETQEE. Ser48 is modified (phosphoserine). Thr50 carries the post-translational modification Phosphothreonine. In terms of domain architecture, CAP-Gly 1 spans 78–120; it reads GETQFAPGQWAGIVLDEPIGKNDGSVAGVRYFQCEPLKGIFTR. Residues 97–101 form an important for tubulin binding region; that stretch reads GKNDG. The interval 129 to 182 is disordered; the sequence is QAEDEANGLQAAPGRTASPLSTAAATMVSSSPATPSNIPHKPSQSTAKEPSATP. Ser146 is modified (phosphoserine). The span at 146 to 182 shows a compositional bias: polar residues; it reads SPLSTAAATMVSSSPATPSNIPHKPSQSTAKEPSATP. Thr181 carries the post-translational modification Phosphothreonine. 4 positions are modified to phosphoserine: Ser194, Ser196, Ser199, and Ser203. Positions 231 to 273 constitute a CAP-Gly 2 domain; that stretch reads GETDFAKGEWCGVELDEPLGKNDGAVAGTRYFQCQPKYGLFAP. Low complexity predominate over residues 302-331; that stretch reads TPASLKRSPSASSLSSMSSVASSVSSKPSR. Residues 302–336 are disordered; that stretch reads TPASLKRSPSASSLSSMSSVASSVSSKPSRTGLLT. Ser309 bears the Phosphoserine mark. Ser311 carries the post-translational modification Phosphoserine; by PKA. A phosphoserine mark is found at Ser314, Ser347, and Ser1189. A coiled-coil region spans residues 349-1306; that stretch reads TTALQEALKE…VEMMSEAALN (958 aa). Positions 1251-1272 are disordered; that stretch reads KRQLSSSSGNTDAQAEEDERAQ. Phosphoserine is present on Ser1317. The CCHC-type zinc-finger motif lies at 1370 to 1387; sequence PYCEICEMFGHWATNCND.

In terms of assembly, interacts with MTOR; phosphorylates and regulates CLIP1. Interacts (via CAP-Gly domains) with tubulin. Interacts with SLAIN2. Interacts with TUBA1B, MAPRE1 and MAPRE3. Interacts (via zinc finger) with DCTN1. Binds preferentially to tyrosinated microtubules, and only marginally to detyrosinated microtubules. Phosphorylated. Phosphorylation induces conformational changes by increasing the affinity of the N-terminus for C-terminus, resulting in inhibition of its function thus decreasing its binding to microtubules and DCTN1. Exhibits a folded, autoinhibited conformation when phosphorylated and an open conformation when dephosphorylated with increased binding affinity to microtubules and DCTN1. Phosphorylation regulates its recruitment to tyrosinated microtubules and the recruitment of vesicular cargo to microtubules in neurons. Phosphorylation by MTOR may positively regulate CLIP1 association with microtubules. As to expression, expressed in the testes (at protein level).

The protein resides in the cytoplasm. It localises to the cytoskeleton. Its subcellular location is the cytoplasmic vesicle membrane. It is found in the cell projection. The protein localises to the ruffle. Its function is as follows. Binds to the plus end of microtubules and regulates the dynamics of the microtubule cytoskeleton. Promotes microtubule growth and microtubule bundling. Links cytoplasmic vesicles to microtubules and thereby plays an important role in intracellular vesicle trafficking. Plays a role macropinocytosis and endosome trafficking. The chain is CAP-Gly domain-containing linker protein 1 (Clip1) from Mus musculus (Mouse).